The following is a 33-amino-acid chain: Photosystem II reaction center protein Psb30 (33 aa).

Residues 5-25 (LIAQLTFLTSIIVSGPLVIAL) form a helical membrane-spanning segment.

This sequence belongs to the Psb30/Ycf12 family. As to quaternary structure, PSII is composed of 1 copy each of membrane proteins PsbA, PsbB, PsbC, PsbD, PsbE, PsbF, PsbH, PsbI, PsbJ, PsbK, PsbL, PsbM, PsbT, PsbX, PsbY, PsbZ, Psb30/Ycf12, peripheral proteins of the oxygen-evolving complex and a large number of cofactors. It forms dimeric complexes.

The protein localises to the plastid. It localises to the chloroplast thylakoid membrane. Functionally, a core subunit of photosystem II (PSII), probably helps stabilize the reaction center. The sequence is that of Photosystem II reaction center protein Psb30 from Psilotum nudum (Whisk fern).